Consider the following 101-residue polypeptide: Apolipoprotein C-II (101 aa).

A signal peptide spans 1 to 22; sequence MGARHLLALLLVLLVLGFEVQG. The lipid binding stretch occupies residues 66 to 74; the sequence is TMDEKIRDM. Residues 78–101 are lipoprotein lipase cofactor; that stretch reads STAAVSTYVGIFTDQLLSLLKGED.

Belongs to the apolipoprotein C2 family. Post-translationally, proapolipoprotein C-II is synthesized as a sialic acid containing glycoprotein which is subsequently desialylated prior to its proteolytic processing. Proapolipoprotein C-II, the major form found in plasma undergoes proteolytic cleavage of its N-terminal hexapeptide to generate apolipoprotein C-II, which occurs as the minor form in plasma.

It is found in the secreted. Functionally, component of chylomicrons, very low-density lipoproteins (VLDL), low-density lipoproteins (LDL), and high-density lipoproteins (HDL) in plasma. Plays an important role in lipoprotein metabolism as an activator of lipoprotein lipase. Both proapolipoprotein C-II and apolipoprotein C-II can activate lipoprotein lipase. This Tapirus terrestris (Lowland tapir) protein is Apolipoprotein C-II (APOC2).